The sequence spans 242 residues: ATP-dependent dethiobiotin synthetase BioD (242 aa).

Residue 15-20 participates in ATP binding; sequence DVGKTV. Thr19 contacts Mg(2+). Lys40 is an active-site residue. Residue Ser44 participates in substrate binding. A Mg(2+)-binding site is contributed by Glu117. Residues 117-120, 178-179, and 208-210 contribute to the ATP site; these read EGAG, NQ, and PYS.

It belongs to the dethiobiotin synthetase family. Homodimer. Requires Mg(2+) as cofactor.

The protein resides in the cytoplasm. It carries out the reaction (7R,8S)-7,8-diammoniononanoate + CO2 + ATP = (4R,5S)-dethiobiotin + ADP + phosphate + 3 H(+). Its pathway is cofactor biosynthesis; biotin biosynthesis; biotin from 7,8-diaminononanoate: step 1/2. Its function is as follows. Catalyzes a mechanistically unusual reaction, the ATP-dependent insertion of CO2 between the N7 and N8 nitrogen atoms of 7,8-diaminopelargonic acid (DAPA, also called 7,8-diammoniononanoate) to form a ureido ring. The sequence is that of ATP-dependent dethiobiotin synthetase BioD from Halalkalibacterium halodurans (strain ATCC BAA-125 / DSM 18197 / FERM 7344 / JCM 9153 / C-125) (Bacillus halodurans).